A 177-amino-acid chain; its full sequence is Probable prophage lysozyme (177 aa).

The active-site Proton donor is Glu-35. Asp-44 functions as the Nucleophile in the catalytic mechanism.

Belongs to the glycosyl hydrolase 24 family.

The enzyme catalyses Hydrolysis of (1-&gt;4)-beta-linkages between N-acetylmuramic acid and N-acetyl-D-glucosamine residues in a peptidoglycan and between N-acetyl-D-glucosamine residues in chitodextrins.. Essential for lysis of bacterial cell wall, by showing cell wall hydrolyzing activity. This is Probable prophage lysozyme (rrrQ) from Escherichia coli (strain K12).